A 355-amino-acid chain; its full sequence is Peptide chain release factor 1 (355 aa).

Q233 carries the N5-methylglutamine modification. Basic and acidic residues predominate over residues K280–R293. The segment at K280–F310 is disordered.

It belongs to the prokaryotic/mitochondrial release factor family. Methylated by PrmC. Methylation increases the termination efficiency of RF1.

It localises to the cytoplasm. In terms of biological role, peptide chain release factor 1 directs the termination of translation in response to the peptide chain termination codons UAG and UAA. In Rickettsia prowazekii (strain Madrid E), this protein is Peptide chain release factor 1 (prfA).